The following is a 172-amino-acid chain: C-phycocyanin beta subunit (172 aa).

Asn-72 is modified (N4-methylasparagine). 2 residues coordinate (2R,3E)-phycocyanobilin: Cys-82 and Cys-153.

It belongs to the phycobiliprotein family. In terms of assembly, the alpha and beta subunits exhibit high affinity for one another and form heterodimers. These heterodimers form heterohexamers of 3 alpha and 3 beta subunits which, in turn, aggregate into a heterododecamer consisting of 2 heterohexamers. Contains two covalently linked bilin chromophores.

The protein localises to the cellular thylakoid membrane. Functionally, light-harvesting photosynthetic bile pigment-protein from the phycobiliprotein complex (phycobilisome, PBS). Phycocyanin is the major phycobiliprotein in the PBS rod. In Arthrospira platensis (Spirulina platensis), this protein is C-phycocyanin beta subunit (cpcB).